The following is a 396-amino-acid chain: Phosphopentomutase (396 aa).

Residues aspartate 13, aspartate 288, histidine 293, aspartate 329, histidine 330, and histidine 341 each contribute to the Mn(2+) site.

The protein belongs to the phosphopentomutase family. Mn(2+) serves as cofactor.

It localises to the cytoplasm. The enzyme catalyses 2-deoxy-alpha-D-ribose 1-phosphate = 2-deoxy-D-ribose 5-phosphate. It catalyses the reaction alpha-D-ribose 1-phosphate = D-ribose 5-phosphate. The protein operates within carbohydrate degradation; 2-deoxy-D-ribose 1-phosphate degradation; D-glyceraldehyde 3-phosphate and acetaldehyde from 2-deoxy-alpha-D-ribose 1-phosphate: step 1/2. Functionally, isomerase that catalyzes the conversion of deoxy-ribose 1-phosphate (dRib-1-P) and ribose 1-phosphate (Rib-1-P) to deoxy-ribose 5-phosphate (dRib-5-P) and ribose 5-phosphate (Rib-5-P), respectively. The polypeptide is Phosphopentomutase (Clostridium perfringens (strain 13 / Type A)).